Here is a 23-residue protein sequence, read N- to C-terminus: Aurein-4.3 (23 aa).

The protein belongs to the frog skin active peptide (FSAP) family. Aurein subfamily. In terms of tissue distribution, expressed by the skin dorsal glands.

The protein resides in the secreted. Its function is as follows. Has no antimicrobial or anticancer activity. The protein is Aurein-4.3 of Ranoidea aurea (Green and golden bell frog).